Reading from the N-terminus, the 1107-residue chain is Membrane-associated guanylate kinase, WW and PDZ domain-containing protein 3 (1107 aa).

Residues 17–102 enclose the PDZ 1 domain; it reads ECGLSGVGGD…PIRLKTVKPG (86 aa). The 175-residue stretch at 110–284 folds into the Guanylate kinase-like domain; that stretch reads RHYLSLQFQK…SMDFRNYLTR (175 aa). An ATP-binding site is contributed by 117-124; the sequence is FQKGSIDH. The segment at 210–277 is disordered; it reads FDTETQRKRT…SYNQTNSSMD (68 aa). The span at 220-231 shows a compositional bias: polar residues; sequence TSVSKMQRTDSS. The span at 232 to 241 shows a compositional bias: acidic residues; it reads LPEEEDEEER. A compositionally biased stretch (basic and acidic residues) spans 251 to 261; that stretch reads TDHRDRQEPSE. Over residues 267 to 277 the composition is skewed to polar residues; sequence PSYNQTNSSMD. 2 consecutive WW domains span residues 289 to 322 and 335 to 368; these read EPLP…DPRL and GELP…NPVL. Positions 374-398 are disordered; the sequence is KQLNPAPSEGTVHQEPENSQFTRDP. PDZ domains follow at residues 407–489, 577–653, 727–809, and 853–940; these read HTSL…TLCR, TIPL…LILR, DVFL…TVRR, and DVIL…IAEE. A disordered region spans residues 941–975; it reads EHRGPPSGSNSARQSPAPQHRPMGQTQPTYGTLDR. The segment covering 947–957 has biased composition (polar residues); it reads SGSNSARQSPA. One can recognise a PDZ 6 domain in the interval 1003 to 1085; sequence PVELERGPRG…KVLLLLRPGT (83 aa).

The protein belongs to the MAGUK family.

The protein resides in the cell membrane. It is found in the cell junction. The protein localises to the tight junction. Acts as a scaffolding protein at cell-cell junctions, thereby regulating various cellular and signaling processes. In Xenopus tropicalis (Western clawed frog), this protein is Membrane-associated guanylate kinase, WW and PDZ domain-containing protein 3 (magi3).